We begin with the raw amino-acid sequence, 185 residues long: MLKPSRTHLTLRHEPHWIPAGLIHRLKSPRQLHDWLLDSSSLTAKIRIGCPEMDVRILSETYEKPLISEAHHLKIPLSQKTWIRCVFLMCNGQPIVYARTVIPYWKTGNPWYALKHLGNRPLGEVLFQLPNLKRTPFQITQTHAQNWPHLDLEDSKQIKTFARKSTFIQGKYPLLLTEAFIESSL.

Residues arginine 84, leucine 122, and glutamate 178 each contribute to the substrate site.

The protein belongs to the UbiC family.

It localises to the cytoplasm. The enzyme catalyses chorismate = 4-hydroxybenzoate + pyruvate. It functions in the pathway cofactor biosynthesis; ubiquinone biosynthesis. In terms of biological role, removes the pyruvyl group from chorismate, with concomitant aromatization of the ring, to provide 4-hydroxybenzoate (4HB) for the ubiquinone pathway. This chain is Probable chorismate pyruvate-lyase, found in Hydrogenovibrio crunogenus (strain DSM 25203 / XCL-2) (Thiomicrospira crunogena).